We begin with the raw amino-acid sequence, 296 residues long: L-fucono-1,5-lactonase (296 aa).

It belongs to the metallo-dependent hydrolases superfamily. Monomer. Does not require a divalent metal for activity. The purified enzyme contains Zn(2+), but the addition of chelators does not diminish the catalytic activity of the enzyme, indicating that it does not require a divalent cation for substrate turnover. is required as a cofactor.

It carries out the reaction L-fucono-1,5-lactone + H2O = L-fuconate + H(+). The enzyme catalyses L-fucono-1,4-lactone + H2O = L-fuconate + H(+). It catalyses the reaction D-arabinono-1,4-lactone + H2O = D-arabinonate + H(+). The catalysed reaction is L-xylono-1,4-lactone + H2O = L-xylonate + H(+). It carries out the reaction L-galactono-1,4-lactone + H2O = L-galactonate + H(+). It participates in carbohydrate degradation; L-fucose degradation. L-fucono-1,5-lactonase involved in an L-fucose degradation pathway. Catalyzes the hydrolysis of L-fucono-1,5-lactone to L-fuconate. L-fucono-1,5-lactone is the best substrate, but the enzyme can also hydrolyze L-fucono-1,4-lactone, L-galactono-1,4-lactone D-arabinono-1,4-lactone and L-xylono-1,4-lactone. This chain is L-fucono-1,5-lactonase, found in Burkholderia multivorans (strain ATCC 17616 / 249).